We begin with the raw amino-acid sequence, 286 residues long: UPF0725 protein At2g20620 (286 aa).

The segment at 1-49 is disordered; it reads MVLETPVCSPIDKESSSDDVQLNKPPKKKRKLDVVYPPRDNTSSSSDVK.

It belongs to the UPF0725 (EMB2204) family.

The protein is UPF0725 protein At2g20620 of Arabidopsis thaliana (Mouse-ear cress).